A 782-amino-acid polypeptide reads, in one-letter code: Endonuclease MutS2 (782 aa).

336–343 serves as a coordination point for ATP; that stretch reads GPNTGGKT. Positions 707–782 constitute a Smr domain; that stretch reads LDLRGYRYED…GFGVTVATLK (76 aa).

The protein belongs to the DNA mismatch repair MutS family. MutS2 subfamily. Homodimer. Binds to stalled ribosomes, contacting rRNA.

Functionally, endonuclease that is involved in the suppression of homologous recombination and thus may have a key role in the control of bacterial genetic diversity. In terms of biological role, acts as a ribosome collision sensor, splitting the ribosome into its 2 subunits. Detects stalled/collided 70S ribosomes which it binds and splits by an ATP-hydrolysis driven conformational change. Acts upstream of the ribosome quality control system (RQC), a ribosome-associated complex that mediates the extraction of incompletely synthesized nascent chains from stalled ribosomes and their subsequent degradation. Probably generates substrates for RQC. In Staphylococcus aureus (strain COL), this protein is Endonuclease MutS2.